Here is a 231-residue protein sequence, read N- to C-terminus: Putative cobalt transport protein CbiM 1 (231 aa).

The next 6 helical transmembrane spans lie at 6–26, 41–61, 79–99, 107–127, 136–156, and 172–192; these read GFLPIGWCVFWAVLAAPFLIY, VLPLMAVCGAFIFVVSLVDIP, FFGPAVTSVLGLIILVFQALL, TLGATAFSMAVMGPLAAWLVF, VPLGPAVFCAAVVANCVTYLI, and LTAFLAAAAVFAVVQIPISII.

Belongs to the CbiM family. Forms an energy-coupling factor (ECF) transporter complex composed of an ATP-binding protein (A component, CbiO), a transmembrane protein (T component, CbiQ) and 2 possible substrate-capture proteins (S components, CbiM and CbiN) of unknown stoichimetry.

Its subcellular location is the cell membrane. Its pathway is cofactor biosynthesis; adenosylcobalamin biosynthesis. In terms of biological role, part of the energy-coupling factor (ECF) transporter complex CbiMNOQ involved in cobalt import. The sequence is that of Putative cobalt transport protein CbiM 1 from Methanocorpusculum labreanum (strain ATCC 43576 / DSM 4855 / Z).